Reading from the N-terminus, the 894-residue chain is Eukaryotic translation initiation factor 3 subunit C (894 aa).

Disordered regions lie at residues 1-28 and 162-235; these read MSRF…KANK and SDYR…VTKM. Acidic residues-rich tracts occupy residues 12–22, 169–189, and 203–214; these read SDTDSSEDEVE, DEDG…EEVP, and SESESDSDDDDS. Residues 215–224 are compositionally biased toward polar residues; the sequence is FNWSSEPDTN. The 177-residue stretch at 625–801 folds into the PCI domain; that stretch reads YHMHINVELM…DCLIMHRVEP (177 aa). Residues 824–894 form a disordered region; it reads QILEPRTGRG…RRHPQKPRAF (71 aa). The span at 845-854 shows a compositional bias: basic and acidic residues; sequence RNERQGDKQK. The span at 855–870 shows a compositional bias: gly residues; that stretch reads GSGGFQGERRGGPGGP. Residues 884-894 show a composition bias toward basic residues; the sequence is QRRHPQKPRAF.

This sequence belongs to the eIF-3 subunit C family. In terms of assembly, component of the eukaryotic translation initiation factor 3 (eIF-3) complex.

The protein resides in the cytoplasm. Its function is as follows. Component of the eukaryotic translation initiation factor 3 (eIF-3) complex, which is involved in protein synthesis of a specialized repertoire of mRNAs and, together with other initiation factors, stimulates binding of mRNA and methionyl-tRNAi to the 40S ribosome. The eIF-3 complex specifically targets and initiates translation of a subset of mRNAs involved in cell proliferation. The chain is Eukaryotic translation initiation factor 3 subunit C from Caenorhabditis briggsae.